Here is a 702-residue protein sequence, read N- to C-terminus: Elongation factor G (702 aa).

The tr-type G domain maps to 8-290 (HRVRNIGIAA…AVAMYLPAPT (283 aa)). Residues 17 to 24 (AHIDAGKT), 87 to 91 (DTPGH), and 141 to 144 (NKMD) each bind GTP.

The protein belongs to the TRAFAC class translation factor GTPase superfamily. Classic translation factor GTPase family. EF-G/EF-2 subfamily.

Its subcellular location is the cytoplasm. Its function is as follows. Catalyzes the GTP-dependent ribosomal translocation step during translation elongation. During this step, the ribosome changes from the pre-translocational (PRE) to the post-translocational (POST) state as the newly formed A-site-bound peptidyl-tRNA and P-site-bound deacylated tRNA move to the P and E sites, respectively. Catalyzes the coordinated movement of the two tRNA molecules, the mRNA and conformational changes in the ribosome. This Aliarcobacter butzleri (strain RM4018) (Arcobacter butzleri) protein is Elongation factor G.